A 143-amino-acid chain; its full sequence is Alpha-amylase/trypsin inhibitor CM16 (143 aa).

Residues 1–24 (MASKSNCVLLLAAVLVSIFAAVAA) form the signal peptide.

Belongs to the protease inhibitor I6 (cereal trypsin/alpha-amylase inhibitor) family. As to quaternary structure, subunit of the tetrameric inhibitor. Post-translationally, five disulfide bonds, which are essential for the inhibitor activity, are probably present. In terms of tissue distribution, developing endosperm.

It is found in the secreted. Alpha-amylase/trypsin inhibitor. It could be involved in insect defense mechanisms. This Triticum aestivum (Wheat) protein is Alpha-amylase/trypsin inhibitor CM16.